The following is a 42-amino-acid chain: Cytochrome b6-f complex subunit 7 (42 aa).

The chain crosses the membrane as a helical span at residues 15-35 (IVTAAVTCIFMVLFGLSLGFA).

The protein belongs to the PetM family. The 4 large subunits of the cytochrome b6-f complex are cytochrome b6, subunit IV (17 kDa polypeptide, PetD), cytochrome f and the Rieske protein, while the 4 small subunits are PetG, PetL, PetM and PetN. The complex functions as a dimer.

The protein localises to the plastid. The protein resides in the chloroplast thylakoid membrane. Its function is as follows. Component of the cytochrome b6-f complex, which mediates electron transfer between photosystem II (PSII) and photosystem I (PSI), cyclic electron flow around PSI, and state transitions. This Trieres chinensis (Marine centric diatom) protein is Cytochrome b6-f complex subunit 7.